Reading from the N-terminus, the 120-residue chain is Large ribosomal subunit protein uL18 (120 aa).

This sequence belongs to the universal ribosomal protein uL18 family. Part of the 50S ribosomal subunit; part of the 5S rRNA/L5/L18/L25 subcomplex. Contacts the 5S and 23S rRNAs.

Functionally, this is one of the proteins that bind and probably mediate the attachment of the 5S RNA into the large ribosomal subunit, where it forms part of the central protuberance. In Brucella suis biovar 1 (strain 1330), this protein is Large ribosomal subunit protein uL18.